Consider the following 1023-residue polypeptide: Presequence protease, mitochondrial (1023 aa).

The transit peptide at Met1–Leu62 directs the protein to the mitochondrion. Position 99 (His99) interacts with Zn(2+). Glu102 serves as the catalytic Proton acceptor. Residues His103 and Glu200 each coordinate Zn(2+). An intrachain disulfide couples Cys114 to Cys551.

Belongs to the peptidase M16 family. PreP subfamily. As to quaternary structure, monomer and homodimer; homodimerization is induced by binding of the substrate. The cofactor is Zn(2+). A disulfide bond locks the enzyme in the closed conformation preventing substrate entry into the catalytic chamber.

It is found in the mitochondrion matrix. With respect to regulation, mainly exists in a closed and catalytically competent conformation but a closed-to-open switch allows substrate entry into the catalytic chamber. Substrate binding induces closure and dimerization. A disulfide bond may lock the enzyme in a closed conformation preventing substrate entry into the catalytic chamber, participating in redox regulation of the enzyme. Inhibited by metal-chelating agents. Inhibited by nickel and zinc excess, and slightly activated by manganese. In terms of biological role, metalloendopeptidase of the mitochondrial matrix that functions in peptide cleavage and degradation rather than in protein processing. Has an ATP-independent activity. Specifically cleaves peptides in the range of 5 to 65 residues. Shows a preference for cleavage after small polar residues and before basic residues, but without any positional preference. Degrades the transit peptides of mitochondrial proteins after their cleavage. Also degrades other unstructured peptides. This Danio rerio (Zebrafish) protein is Presequence protease, mitochondrial (pitrm1).